Consider the following 150-residue polypeptide: Large ribosomal subunit protein bL9 (150 aa).

This sequence belongs to the bacterial ribosomal protein bL9 family.

Functionally, binds to the 23S rRNA. The protein is Large ribosomal subunit protein bL9 of Corynebacterium diphtheriae (strain ATCC 700971 / NCTC 13129 / Biotype gravis).